The following is a 137-amino-acid chain: MQATDSKNKVVYWGTGRRKSAVAAVRLVPGTGAITVNGRDGETHFNRIPTYIQTIKAPLETLGLENEYDIIVKAEGGGLTGQADAVKLGVARALCQLAPENRPPLKSEGYLTRDPRAKERKKYGLHKARKAPQYSKR.

Residues 100–137 form a disordered region; the sequence is ENRPPLKSEGYLTRDPRAKERKKYGLHKARKAPQYSKR. The segment covering 118-137 has biased composition (basic residues); sequence KERKKYGLHKARKAPQYSKR.

Belongs to the universal ribosomal protein uS9 family.

The sequence is that of Small ribosomal subunit protein uS9 from Microcystis aeruginosa (strain NIES-843 / IAM M-2473).